The following is a 176-amino-acid chain: Ferredoxin-type protein NapF (176 aa).

4Fe-4S ferredoxin-type domains lie at 39-68 and 71-100; these read VENSIFVARCTRCGDCLSVCETNILVKGDA and PEVRFDNGECTFCGKCVDACKQPIFYPRDQ. Cys-48, Cys-51, Cys-54, Cys-58, Cys-80, Cys-83, Cys-86, Cys-90, Cys-113, Cys-121, Cys-124, Cys-128, Cys-152, Cys-155, Cys-158, and Cys-162 together coordinate [4Fe-4S] cluster. 2 consecutive 4Fe-4S ferredoxin-type domains span residues 119–138 and 143–172; these read IECRTCQDNCPANAIRFKLQ and AQPLVNFDACNGCGACVQGCPVNAITMNDL.

It belongs to the NapF family. In terms of assembly, interacts with the cytoplasmic NapA precursor. Requires [4Fe-4S] cluster as cofactor.

It localises to the cytoplasm. Could be involved in the maturation of NapA, the catalytic subunit of the periplasmic nitrate reductase, before its export into the periplasm. This Haemophilus influenzae (strain ATCC 51907 / DSM 11121 / KW20 / Rd) protein is Ferredoxin-type protein NapF.